Here is a 394-residue protein sequence, read N- to C-terminus: Flap endonuclease 1 (394 aa).

Positions Met1 to Lys104 are N-domain. Asp34 contributes to the Mg(2+) binding site. DNA-binding residues include Arg47 and Arg70. Mg(2+) is bound by residues Asp86, Glu158, Glu160, Asp179, and Asp181. The segment at Asp122 to His253 is I-domain. Glu158 is a binding site for DNA. 2 residues coordinate DNA: Gly231 and Asp233. Asp233 lines the Mg(2+) pocket. The segment at Gln341–Phe349 is interaction with PCNA. Residues Glu356–Glu383 show a composition bias toward basic and acidic residues. Positions Glu356–Ala394 are disordered. Basic residues predominate over residues Lys384 to Ala394.

Belongs to the XPG/RAD2 endonuclease family. FEN1 subfamily. In terms of assembly, interacts with PCNA. Three molecules of dnr-8/fen1 bind to one PCNA trimer with each molecule binding to one PCNA monomer. PCNA stimulates the nuclease activity without altering cleavage specificity. Mg(2+) serves as cofactor. In terms of processing, phosphorylated. Phosphorylation upon DNA damage induces relocalization to the nuclear plasma.

Its subcellular location is the nucleus. The protein localises to the nucleolus. The protein resides in the nucleoplasm. It is found in the mitochondrion. Structure-specific nuclease with 5'-flap endonuclease and 5'-3' exonuclease activities involved in DNA replication and repair. During DNA replication, cleaves the 5'-overhanging flap structure that is generated by displacement synthesis when DNA polymerase encounters the 5'-end of a downstream Okazaki fragment. It enters the flap from the 5'-end and then tracks to cleave the flap base, leaving a nick for ligation. Also involved in the long patch base excision repair (LP-BER) pathway, by cleaving within the apurinic/apyrimidinic (AP) site-terminated flap. Acts as a genome stabilization factor that prevents flaps from equilibrating into structures that lead to duplications and deletions. Also possesses 5'-3' exonuclease activity on nicked or gapped double-stranded DNA, and exhibits RNase H activity. Also involved in replication and repair of rDNA and in repairing mitochondrial DNA. The sequence is that of Flap endonuclease 1 (dnr-8) from Neurospora crassa (strain ATCC 24698 / 74-OR23-1A / CBS 708.71 / DSM 1257 / FGSC 987).